Here is a 212-residue protein sequence, read N- to C-terminus: Inactive ribonuclease-like protein 10 (212 aa).

The first 24 residues, methionine 1–glycine 24, serve as a signal peptide directing secretion.

It belongs to the pancreatic ribonuclease family. Post-translationally, the N-terminus is blocked. Glycosylated. In terms of tissue distribution, male-specific expression in proximal caput of the epididymis.

Its subcellular location is the secreted. In terms of biological role, secreted proximal epididymal protein required for post-testicular sperm maturation and male fertility. May be involved in sperm adhesion to the egg zona pellucida. Does not have ribonuclease activity. The polypeptide is Inactive ribonuclease-like protein 10 (RNASE10) (Ovis aries (Sheep)).